Here is a 225-residue protein sequence, read N- to C-terminus: Iron-sulfur flavoprotein CD630_04720 (225 aa).

Cys-49, Cys-52, Cys-55, and Cys-61 together coordinate [4Fe-4S] cluster.

It belongs to the SsuE family. Isf subfamily. In terms of assembly, homodimer. FMN serves as cofactor. It depends on [4Fe-4S] cluster as a cofactor.

Redox-active protein probably involved in electron transport. In Clostridioides difficile (strain 630) (Peptoclostridium difficile), this protein is Iron-sulfur flavoprotein CD630_04720.